A 182-amino-acid polypeptide reads, in one-letter code: UPF0215 protein Pcal_0119 (182 aa).

This sequence belongs to the UPF0215 family.

This is UPF0215 protein Pcal_0119 from Pyrobaculum calidifontis (strain DSM 21063 / JCM 11548 / VA1).